The sequence spans 320 residues: MSRGILYYQVGEALESYFLIKSATKAVASNGKPFLTLILSDHTGEIEAKLWGCSPEDEATFVSGAIVHISGQLSEYRGRQQLKIGSIRPTTAMDQVKVSDFVRSAPLSPDDMLEQITQYIFEMKNPKIQRMTRHLLKKHQTAFLEYPAATTNHHEFVSGLAYHVVCMLNVAKSLAALYPTLDTDLLYAGIILHDLGKVKELSGPIDTTYTIEGKLLGHISILVNEIGETANELGIEGEEVIILQHLVLAHHSKGEWGSPKPPLIREAEILHMIDNIDAKMNMMDRALERVQPGEFSERIKAMDNRSFYKPNFHEPPLDLS.

The OB DNA-binding region spans 18 to 90 (FLIKSATKAV…QLKIGSIRPT (73 aa)). The 117-residue stretch at 163–279 (HVVCMLNVAK…LHMIDNIDAK (117 aa)) folds into the HD domain.

The protein belongs to the YhaM family.

Shows a 3'-5' exoribonuclease activity. The chain is 3'-5' exoribonuclease YhaM from Halalkalibacterium halodurans (strain ATCC BAA-125 / DSM 18197 / FERM 7344 / JCM 9153 / C-125) (Bacillus halodurans).